Reading from the N-terminus, the 197-residue chain is Adenylyl-sulfate kinase (197 aa).

ATP is bound at residue 33–40 (GLSGSGKS). Catalysis depends on serine 107, which acts as the Phosphoserine intermediate.

It belongs to the APS kinase family.

The enzyme catalyses adenosine 5'-phosphosulfate + ATP = 3'-phosphoadenylyl sulfate + ADP + H(+). The protein operates within sulfur metabolism; hydrogen sulfide biosynthesis; sulfite from sulfate: step 2/3. Catalyzes the synthesis of activated sulfate. This Bacillus licheniformis (strain ATCC 14580 / DSM 13 / JCM 2505 / CCUG 7422 / NBRC 12200 / NCIMB 9375 / NCTC 10341 / NRRL NRS-1264 / Gibson 46) protein is Adenylyl-sulfate kinase.